Reading from the N-terminus, the 202-residue chain is FMN-dependent NADH:quinone oxidoreductase 1 (202 aa).

FMN contacts are provided by residues Ser9, 15–17, 95–98, and 139–142; these read SAS, MYNF, and TSGG.

It belongs to the azoreductase type 1 family. In terms of assembly, homodimer. FMN is required as a cofactor.

The enzyme catalyses 2 a quinone + NADH + H(+) = 2 a 1,4-benzosemiquinone + NAD(+). The catalysed reaction is N,N-dimethyl-1,4-phenylenediamine + anthranilate + 2 NAD(+) = 2-(4-dimethylaminophenyl)diazenylbenzoate + 2 NADH + 2 H(+). Functionally, quinone reductase that provides resistance to thiol-specific stress caused by electrophilic quinones. Also exhibits azoreductase activity. Catalyzes the reductive cleavage of the azo bond in aromatic azo compounds to the corresponding amines. This chain is FMN-dependent NADH:quinone oxidoreductase 1, found in Pseudomonas syringae pv. tomato (strain ATCC BAA-871 / DC3000).